Reading from the N-terminus, the 631-residue chain is MDYPDRFDVIVIGGGHAGTEAALAAARMGCQTLLLTHNIETLGQMSCNPAIGGIGKSHLVKEIDALGGAMAHATDLGGIQFRVLNARKGPAVRATRAQADRVRYKAAIRGMLENQPNLTLFQQAADDLIVENDTVRGVVTQTGIRVFGESVVLCTGTFLGGVIHIGLDHHAGGRAGDPPSNALAQRLRALPFHVDRLKTGTPPRLDAKSVDFSVLETQPGDDPTPVMSYLGRRDQHPRQVACHIAHTNARTHEIIHANLDRSPMYSGVIGGVGPRYCPSIEDKVNRFADKSSHQIFVEPEGLDTHELYPNGISTSLPFDVQFEVVRSIKGFENAHITRPGYAIEYDFFDPRDLKHSLETKFIHNLFFAGQINGTTGYEEAAAQGLLAGLNAARRAQGQDAWSPRRDEAYLGVLVDDLITMGTQEPYRMFTSRAEHRLLLREDNADLRLTEIGRELGLVDDTRWAHFSTKREAIARETERLRETWVQPSSELAKRLSGKLDKPLAREYRLADLLKRPELNHADLADDAPELDPAVAEQVQIQAKYQGYIARQQDEIDRLRRHEALRLPEDLDYARIDGLSHEIRQKLEAARPETLAQAGRISGVTPAAVSLLLVHLKKRRLIEDQDVQAVNA.

13–18 provides a ligand contact to FAD; the sequence is GGGHAG. 273-287 lines the NAD(+) pocket; the sequence is GPRYCPSIEDKVNRF.

The protein belongs to the MnmG family. Homodimer. Heterotetramer of two MnmE and two MnmG subunits. Requires FAD as cofactor.

The protein localises to the cytoplasm. Its function is as follows. NAD-binding protein involved in the addition of a carboxymethylaminomethyl (cmnm) group at the wobble position (U34) of certain tRNAs, forming tRNA-cmnm(5)s(2)U34. This Chromohalobacter salexigens (strain ATCC BAA-138 / DSM 3043 / CIP 106854 / NCIMB 13768 / 1H11) protein is tRNA uridine 5-carboxymethylaminomethyl modification enzyme MnmG.